A 107-amino-acid chain; its full sequence is Phosphoribosyl-ATP pyrophosphatase (107 aa).

Belongs to the PRA-PH family.

It is found in the cytoplasm. It catalyses the reaction 1-(5-phospho-beta-D-ribosyl)-ATP + H2O = 1-(5-phospho-beta-D-ribosyl)-5'-AMP + diphosphate + H(+). The protein operates within amino-acid biosynthesis; L-histidine biosynthesis; L-histidine from 5-phospho-alpha-D-ribose 1-diphosphate: step 2/9. This is Phosphoribosyl-ATP pyrophosphatase from Rhizobium johnstonii (strain DSM 114642 / LMG 32736 / 3841) (Rhizobium leguminosarum bv. viciae).